A 1182-amino-acid chain; its full sequence is Myosin IC heavy chain (1182 aa).

In terms of domain architecture, Myosin motor spans 15–698; it reads EGLDDMTLLS…MLFSLEETRE (684 aa). 109–116 contributes to the ATP binding site; it reads GESGAGKT. The tract at residues 571–593 is actin-binding; it reads AAELVATLMKSTPHYIRTIKPND. Residues 774–957 enclose the TH1 domain; that stretch reads RNRFSMISVR…QFHIASGLPA (184 aa). Disordered stretches follow at residues 999–1052 and 1064–1103; these read KPAP…PAPG and SKPLPSPTGAPMMKKPAPTAPGGPAPAGAPTPMMKKPAGQ. Residues 1013 to 1042 are compositionally biased toward low complexity; that stretch reads KKPAPTAPGGAPMMKKPAPAPGGAPMMKKP. Residues 1081 to 1092 are compositionally biased toward pro residues; it reads PTAPGGPAPAGA. One can recognise an SH3 domain in the interval 1123–1182; sequence PPPQQYIALYEYDAMQPDELTFKENDVINLIKKVDADWWQGELVRTKQIGMLPSNYVQQI.

This sequence belongs to the TRAFAC class myosin-kinesin ATPase superfamily. Myosin family. In terms of assembly, myosin I heavy chain is single-headed. Dimer of a heavy and a light chain. Inability to self-assemble into filaments.

The protein localises to the cell projection. The protein resides in the lamellipodium. Myosin is a protein that binds to actin and has ATPase activity that is activated by actin. Involved in the process of phagocytosis and appears to support streaming behavior. The chain is Myosin IC heavy chain (myoC) from Dictyostelium discoideum (Social amoeba).